The following is a 1252-amino-acid chain: ATP-dependent helicase/nuclease subunit A (1252 aa).

Residues 6–489 enclose the UvrD-like helicase ATP-binding domain; that stretch reads TNWTEEQKEA…VLLYKNFRSR (484 aa). Position 27–34 (27–34) interacts with ATP; sequence AAAGSGKT. Residues 523-811 form the UvrD-like helicase C-terminal domain; that stretch reads ANYEEIEENL…RIMSIHKSKG (289 aa).

Belongs to the helicase family. AddA subfamily. As to quaternary structure, heterodimer of AddA and AddB/RexB. Mg(2+) serves as cofactor.

It catalyses the reaction Couples ATP hydrolysis with the unwinding of duplex DNA by translocating in the 3'-5' direction.. The catalysed reaction is ATP + H2O = ADP + phosphate + H(+). In terms of biological role, the heterodimer acts as both an ATP-dependent DNA helicase and an ATP-dependent, dual-direction single-stranded exonuclease. Recognizes the chi site generating a DNA molecule suitable for the initiation of homologous recombination. The AddA nuclease domain is required for chi fragment generation; this subunit has the helicase and 3' -&gt; 5' nuclease activities. This chain is ATP-dependent helicase/nuclease subunit A, found in Clostridium acetobutylicum (strain ATCC 824 / DSM 792 / JCM 1419 / IAM 19013 / LMG 5710 / NBRC 13948 / NRRL B-527 / VKM B-1787 / 2291 / W).